A 416-amino-acid chain; its full sequence is NADH-quinone oxidoreductase subunit H (416 aa).

A run of 9 helical transmembrane segments spans residues 16–36, 84–104, 124–144, 165–185, 197–217, 260–280, 288–308, 320–340, and 353–373; these read LILA…LAAI, PVYL…FAVI, LAVA…GIVL, VVSY…YAGT, STWY…SMVG, VSAL…PISL, WWPL…YIWL, FMAI…MIVA, and WASG…VVLW.

This sequence belongs to the complex I subunit 1 family. NDH-1 is composed of 14 different subunits. Subunits NuoA, H, J, K, L, M, N constitute the membrane sector of the complex.

The protein localises to the cell membrane. The catalysed reaction is a quinone + NADH + 5 H(+)(in) = a quinol + NAD(+) + 4 H(+)(out). Its function is as follows. NDH-1 shuttles electrons from NADH, via FMN and iron-sulfur (Fe-S) centers, to quinones in the respiratory chain. The immediate electron acceptor for the enzyme in this species is believed to be menaquinone. Couples the redox reaction to proton translocation (for every two electrons transferred, four hydrogen ions are translocated across the cytoplasmic membrane), and thus conserves the redox energy in a proton gradient. This subunit may bind ubiquinone. The sequence is that of NADH-quinone oxidoreductase subunit H from Mycobacterium sp. (strain JLS).